We begin with the raw amino-acid sequence, 1364 residues long: ABC-type transporter cns4 (1364 aa).

One can recognise an ABC transporter 1 domain in the interval 42–290 (SRVKESRAKP…MEEMGFLYTD (249 aa)). N-linked (GlcNAc...) asparagine glycans are attached at residues Asn-152 and Asn-214. 5 helical membrane passes run 435–455 (LFFA…GSFA), 483–503 (IPLI…MTGL), 508–528 (EAFL…TALF), 540–560 (AAIK…GFLI), and 567–587 (PWLG…AVLS). An N-linked (GlcNAc...) asparagine glycan is attached at Asn-610. The helical transmembrane segment at 650–670 (FAIVWVWWALFVILTVYFTSN) threads the bilayer. N-linked (GlcNAc...) asparagine glycosylation is found at Asn-689, Asn-711, and Asn-739. Residues 697–732 (DEEVGSGPDSHDSRNRSGISPIGDKQETSTDGPSKI) are disordered. Residues 737-985 (IRNTSVFTWK…TVNEYFGRNG (249 aa)) form the ABC transporter 2 domain. 779–786 (GSSGAGKT) is an ATP binding site. Transmembrane regions (helical) follow at residues 1076–1094 (LMLH…WKIG), 1105–1125 (FTIF…QPLF), 1146–1166 (AFAT…AVVY), 1185–1205 (AVFF…QAIA), 1211–1231 (AIFA…FCGV), and 1245–1265 (WLYY…FTTF).

It belongs to the ABC transporter superfamily. ABCG family. PDR (TC 3.A.1.205) subfamily.

The protein resides in the cell membrane. Functionally, ABC-type transporter; part of the gene cluster that mediates the biosynthesis of cordycepin (COR) and pentostatin (PTN), two adenosine analogs with related bioactivity profiles as both mimic adenosine and can inhibit some of the processes that are adenosine dependent. Mediates the pumping of pentostatin but not of cordycepin out of fungal cells. Decreasing intracellular pentostatin releases adenosine deaminase (ADA) inhibition, allowing ADA to deaminate cordycepin into non-toxic 3'-d. The protein is ABC-type transporter cns4 of Cordyceps militaris (strain CM01) (Caterpillar fungus).